The primary structure comprises 456 residues: RNA polymerase II-associated protein 1 homolog (456 aa).

The interval 382–456 is disordered; the sequence is LRSVEGSLNE…PVEQLQNEED (75 aa). Ser-388 carries the post-translational modification Phosphoserine. The span at 396–406 shows a compositional bias: basic and acidic residues; that stretch reads EEKPAESREQL. Polar residues-rich tracts occupy residues 408-433 and 441-456; these read SAEQ…QANS and GNTQ…NEED.

The protein belongs to the PAF1 family.

The protein localises to the cytoplasm. The protein resides in the nucleus. In Schizosaccharomyces pombe (strain 972 / ATCC 24843) (Fission yeast), this protein is RNA polymerase II-associated protein 1 homolog.